The primary structure comprises 406 residues: Tryptophan 2,3-dioxygenase A (406 aa).

Substrate-binding positions include 71 to 75 (FIVTH) and Arg143. His327 provides a ligand contact to heme. Thr341 lines the substrate pocket.

Belongs to the tryptophan 2,3-dioxygenase family. As to quaternary structure, homotetramer. Dimer of dimers. Requires heme as cofactor.

It carries out the reaction L-tryptophan + O2 = N-formyl-L-kynurenine. The protein operates within amino-acid degradation; L-tryptophan degradation via kynurenine pathway; L-kynurenine from L-tryptophan: step 1/2. Functionally, heme-dependent dioxygenase that catalyzes the oxidative cleavage of the L-tryptophan (L-Trp) pyrrole ring and converts L-tryptophan to N-formyl-L-kynurenine. Catalyzes the oxidative cleavage of the indole moiety. This is Tryptophan 2,3-dioxygenase A from Danio rerio (Zebrafish).